Reading from the N-terminus, the 473-residue chain is Ribulose bisphosphate carboxylase large chain (473 aa).

Residues Asn116 and Thr166 each coordinate substrate. Residue Lys168 is the Proton acceptor of the active site. Residue Lys170 participates in substrate binding. Mg(2+) contacts are provided by Lys194, Asp196, and Glu197. Lys194 is modified (N6-carboxylysine). The Proton acceptor role is filled by His287. The substrate site is built by Arg288, His320, and Ser372.

It belongs to the RuBisCO large chain family. Type I subfamily. Heterohexadecamer of 8 large chains and 8 small chains. Requires Mg(2+) as cofactor.

It catalyses the reaction 2 (2R)-3-phosphoglycerate + 2 H(+) = D-ribulose 1,5-bisphosphate + CO2 + H2O. The catalysed reaction is D-ribulose 1,5-bisphosphate + O2 = 2-phosphoglycolate + (2R)-3-phosphoglycerate + 2 H(+). RuBisCO catalyzes two reactions: the carboxylation of D-ribulose 1,5-bisphosphate, the primary event in carbon dioxide fixation, as well as the oxidative fragmentation of the pentose substrate. Both reactions occur simultaneously and in competition at the same active site. This chain is Ribulose bisphosphate carboxylase large chain, found in Halorhodospira halophila (strain DSM 244 / SL1) (Ectothiorhodospira halophila (strain DSM 244 / SL1)).